Reading from the N-terminus, the 59-residue chain is Potassium channel toxin alpha-KTx 4.7 (59 aa).

Positions methionine 1–glutamine 22 are cleaved as a signal peptide. 3 disulfide bridges follow: cysteine 29–cysteine 50, cysteine 35–cysteine 55, and cysteine 39–cysteine 57. Residues glycine 48–cysteine 55 form an interaction with Ca(2+)-activated K(+) channels region.

The protein belongs to the short scorpion toxin superfamily. Potassium channel inhibitor family. Alpha-KTx 04 subfamily. In terms of tissue distribution, expressed by the venom gland.

It localises to the secreted. Its function is as follows. Potently blocks Kv1.1/KCNA1 (85%), Kv1.2/KCNA2 (91%), Kv1.3/KCNA3 (89%), Kv1.6/KCNA6 (94%), and Shaker (97%). In Tityus stigmurus (Brazilian scorpion), this protein is Potassium channel toxin alpha-KTx 4.7.